A 175-amino-acid polypeptide reads, in one-letter code: Peptide deformylase (175 aa).

Residues C96 and H138 each coordinate Fe cation. E139 is an active-site residue. H142 contributes to the Fe cation binding site.

It belongs to the polypeptide deformylase family. Fe(2+) is required as a cofactor.

The catalysed reaction is N-terminal N-formyl-L-methionyl-[peptide] + H2O = N-terminal L-methionyl-[peptide] + formate. Its function is as follows. Removes the formyl group from the N-terminal Met of newly synthesized proteins. Requires at least a dipeptide for an efficient rate of reaction. N-terminal L-methionine is a prerequisite for activity but the enzyme has broad specificity at other positions. The polypeptide is Peptide deformylase (Rhodopseudomonas palustris (strain BisB18)).